A 210-amino-acid polypeptide reads, in one-letter code: Outer-membrane lipoprotein LolB (210 aa).

Positions 1 to 29 (MSLISNNEERSLRVRYCIAIALSALLISG) are cleaved as a signal peptide. Cys30 is lipidated: N-palmitoyl cysteine. Residue Cys30 is the site of S-diacylglycerol cysteine attachment.

Belongs to the LolB family. In terms of assembly, monomer.

The protein resides in the cell outer membrane. Functionally, plays a critical role in the incorporation of lipoproteins in the outer membrane after they are released by the LolA protein. The protein is Outer-membrane lipoprotein LolB of Coxiella burnetii (strain CbuG_Q212) (Coxiella burnetii (strain Q212)).